Consider the following 131-residue polypeptide: Protein TIFY 5A (131 aa).

Positions 9 to 13 (LELRL) match the EAR motif. Disordered stretches follow at residues 14–44 (FPTSYDSDSSDTTSVVESTSSGNPQPNEESQ) and 74–131 (REMK…HSRR). Residues 16 to 34 (TSYDSDSSDTTSVVESTSS) show a composition bias toward low complexity. The Tify domain maps to 39–74 (PNEESQRITIFYNGKMCFSSDVTHLQARSIISIASR). Over residues 79 to 100 (KSSSNGSDPPNKSTSFHHNQLP) the composition is skewed to polar residues. Residues 105-127 (SMKKSLQSFLQKRKIRIQATSPY) carry the Jas motif. A Nuclear localization signal motif is present at residues 106–113 (MKKSLQSF). A compositionally biased stretch (polar residues) spans 122-131 (QATSPYHSRR).

This sequence belongs to the TIFY/JAZ family. As to quaternary structure, interacts with TPL and weakly with COI1, but not with AFPH2/NINJA. Interacts with MYC2, MYB21, MYB24, TIFY10A/JAZ1, TIFY10B/JAZ2, TIFY6B/JAZ3, TIFY6A/JAZ4, TIFY11A/JAZ5, TIFY11B/JAZ6, TIFY7/JAZ9, TIFY9/JAZ10 and TIFY3B/JAZ12. Interacts with RHD6 and RSL1. In terms of assembly, (Microbial infection) Interacts with the pathogenic Pseudomonas syringae HopZ1a protein. Post-translationally, (Microbial infection) Acetylated by Pseudomonas syringae HopZ1a. In terms of processing, ubiquitinated.

It is found in the nucleus. In terms of biological role, repressor of jasmonate responses. Unable to associate strongly with COI1 in the presence of jasmonoyl-isoleucine (JA-Ile) and is therefore more resistant to JA-mediated-degradation than other TIFY/JAZ proteins. Repress gene expression through direct recruitment of the corepressor TOPLESS to cognate transcription factors. Interacts with and suppresses RHD6 and RSL1 transcription factor activities to negatively regulate jasmonate-stimulated root hair development. This Arabidopsis thaliana (Mouse-ear cress) protein is Protein TIFY 5A.